The following is a 790-amino-acid chain: B3 domain-containing transcription repressor VAL1 (790 aa).

The disordered stretch occupies residues 234 to 260 (KPSRPAISTPPVASKSAQARIGRPPVE). Residues 295 to 396 (FEKTLSASDA…KLIMGSRKAA (102 aa)) constitute a DNA-binding region (TF-B3). 2 disordered regions span residues 400–429 (DMQGCGLTNGTSTEDTSSSGVTENPPSING) and 446–468 (NLNSETNGGRIGDDPTRVKEKKR). A compositionally biased stretch (polar residues) spans 405 to 429 (GLTNGTSTEDTSSSGVTENPPSING). The CW-type zinc-finger motif lies at 538–588 (SGEQERWATCDDCSKWRRLPVDALLSFKWTCIDNVWDVSRCSCSAPEESLK). Positions 547, 550, 568, and 580 each coordinate Zn(2+). The stretch at 685-732 (LMMRRKKKQLERDVTAAEDKKKKDMELAESDKSKEEKEVNTARIDLNS) forms a coiled coil. Residues 689-737 (RKKKQLERDVTAAEDKKKKDMELAESDKSKEEKEVNTARIDLNSDPYNK) are disordered. Residues 694–724 (LERDVTAAEDKKKKDMELAESDKSKEEKEVN) show a composition bias toward basic and acidic residues.

As to quaternary structure, interacts with SNL1. As to expression, expressed in flowers and at lower levels in roots, stems and leaves.

Its subcellular location is the nucleus. Transcriptional repressor of gene expression involved in embryonic pathways, such as LEC1, ABI3, and FUS3. Repressor of the sugar-inducible genes involved in the seed maturation program in seedlings. Plays an essential role in regulating the transition from seed maturation to seedling growth. Functionally redundant with VAL2/HSL1. In Arabidopsis thaliana (Mouse-ear cress), this protein is B3 domain-containing transcription repressor VAL1 (VAL1).